A 100-amino-acid polypeptide reads, in one-letter code: Aspartyl/glutamyl-tRNA(Asn/Gln) amidotransferase subunit C (100 aa).

It belongs to the GatC family. In terms of assembly, heterotrimer of A, B and C subunits.

It catalyses the reaction L-glutamyl-tRNA(Gln) + L-glutamine + ATP + H2O = L-glutaminyl-tRNA(Gln) + L-glutamate + ADP + phosphate + H(+). The enzyme catalyses L-aspartyl-tRNA(Asn) + L-glutamine + ATP + H2O = L-asparaginyl-tRNA(Asn) + L-glutamate + ADP + phosphate + 2 H(+). Allows the formation of correctly charged Asn-tRNA(Asn) or Gln-tRNA(Gln) through the transamidation of misacylated Asp-tRNA(Asn) or Glu-tRNA(Gln) in organisms which lack either or both of asparaginyl-tRNA or glutaminyl-tRNA synthetases. The reaction takes place in the presence of glutamine and ATP through an activated phospho-Asp-tRNA(Asn) or phospho-Glu-tRNA(Gln). The protein is Aspartyl/glutamyl-tRNA(Asn/Gln) amidotransferase subunit C of Rickettsia felis (strain ATCC VR-1525 / URRWXCal2) (Rickettsia azadi).